Reading from the N-terminus, the 124-residue chain is uncharacterized protein (124 aa).

Positions 1-22 (MGTSSVLLMIASSLILLEVVMT) are cleaved as a signal peptide.

This is an uncharacterized protein from Caenorhabditis elegans.